Consider the following 272-residue polypeptide: Indole-3-glycerol phosphate synthase (272 aa).

Belongs to the TrpC family.

It carries out the reaction 1-(2-carboxyphenylamino)-1-deoxy-D-ribulose 5-phosphate + H(+) = (1S,2R)-1-C-(indol-3-yl)glycerol 3-phosphate + CO2 + H2O. It functions in the pathway amino-acid biosynthesis; L-tryptophan biosynthesis; L-tryptophan from chorismate: step 4/5. This Arthrobacter sp. (strain FB24) protein is Indole-3-glycerol phosphate synthase.